Reading from the N-terminus, the 463-residue chain is Putative ankyrin repeat protein R579 (463 aa).

ANK repeat units lie at residues 124 to 154 (LKTDLMFYAVSKNVSIDVINFLIDMDCKCTI), 156 to 181 (SITRAIAEKKLDIAKIIIDHNPSENI), 242 to 271 (KEKNISSYVIQSNSLNVVKTFVEHGLQFNP), 273 to 299 (IYLWVNGNSESENIVRYIIELGIDYRP), 300 to 328 (HIDRLLKICITSGTFSHLEYLINLGVSQE), 329 to 355 (NINEAFLTAVSEDKFELIKYLIYMGAD), 356 to 385 (INYKNTIAASYTDNIDVLKYLIEKGADITT), and 387 to 416 (GSNDVINHAIGSHQSDFCRCLLENGATITL).

The sequence is that of Putative ankyrin repeat protein R579 from Acanthamoeba polyphaga (Amoeba).